The primary structure comprises 791 residues: Ubiquitin carboxyl-terminal hydrolase 10-A (791 aa).

Composition is skewed to polar residues over residues 118–139 (FSES…SGTG) and 270–284 (DTTE…QTLE). Disordered stretches follow at residues 118 to 156 (FSES…YYSY) and 270 to 291 (DTTE…EDTA). The region spanning 408–788 (RGLINKGNWC…TAYLLYYRRV (381 aa)) is the USP domain. The active-site Nucleophile is the C417. Positions 560 to 580 (EVNKEEQEGSDEEWEQVGPRN) are disordered. The Proton acceptor role is filled by H742.

This sequence belongs to the peptidase C19 family. USP10 subfamily.

The protein resides in the cytoplasm. It localises to the nucleus. It carries out the reaction Thiol-dependent hydrolysis of ester, thioester, amide, peptide and isopeptide bonds formed by the C-terminal Gly of ubiquitin (a 76-residue protein attached to proteins as an intracellular targeting signal).. Its function is as follows. Hydrolase that can remove conjugated ubiquitin from target proteins such as p53/tp53, rps2/us5, rps3/us3, rps10/eS10, becn1, snx3 and cftr. Acts as an essential regulator of p53/tp53 stability: in unstressed cells, specifically deubiquitinates p53/tp53 in the cytoplasm, leading to counteracts MDM2 action and stabilize p53/tp53. Following DNA damage, translocates to the nucleus and deubiquitinates p53/tp53, leading to regulate the p53/TP53-dependent DNA damage response. Component of a regulatory loop that controls autophagy and p53/tp53 levels. Plays a key role in 40S ribosome subunit recycling when a ribosome has stalled during translation: acts both by inhibiting formation of stress granules, which store stalled translation pre-initiation complexes, and mediating deubiquitination of 40S ribosome subunits. Deubiquitinates cftr in early endosomes, enhancing its endocytic recycling. The protein is Ubiquitin carboxyl-terminal hydrolase 10-A (usp10-a) of Xenopus laevis (African clawed frog).